The primary structure comprises 451 residues: UDP-N-acetylmuramoylalanine--D-glutamate ligase (451 aa).

ATP is bound at residue glycine 119–threonine 125.

The protein belongs to the MurCDEF family.

The protein localises to the cytoplasm. It carries out the reaction UDP-N-acetyl-alpha-D-muramoyl-L-alanine + D-glutamate + ATP = UDP-N-acetyl-alpha-D-muramoyl-L-alanyl-D-glutamate + ADP + phosphate + H(+). The protein operates within cell wall biogenesis; peptidoglycan biosynthesis. In terms of biological role, cell wall formation. Catalyzes the addition of glutamate to the nucleotide precursor UDP-N-acetylmuramoyl-L-alanine (UMA). This Streptococcus agalactiae serotype Ia (strain ATCC 27591 / A909 / CDC SS700) protein is UDP-N-acetylmuramoylalanine--D-glutamate ligase.